We begin with the raw amino-acid sequence, 273 residues long: Glutamate racemase (273 aa).

Substrate-binding positions include 10–11 (DS) and 42–43 (YG). C73 functions as the Proton donor/acceptor in the catalytic mechanism. Position 74-75 (74-75 (NT)) interacts with substrate. The active-site Proton donor/acceptor is the C184. A substrate-binding site is contributed by 185–186 (TH).

This sequence belongs to the aspartate/glutamate racemases family.

It catalyses the reaction L-glutamate = D-glutamate. It participates in cell wall biogenesis; peptidoglycan biosynthesis. Provides the (R)-glutamate required for cell wall biosynthesis. The chain is Glutamate racemase from Desulforudis audaxviator (strain MP104C).